The primary structure comprises 595 residues: Aspartate--tRNA ligase (595 aa).

E176 is an L-aspartate binding site. Positions 200–203 (QIFK) are aspartate. R222 lines the L-aspartate pocket. Residues 222–224 (RDE) and Q231 each bind ATP. H450 serves as a coordination point for L-aspartate. An ATP-binding site is contributed by E484. L-aspartate is bound at residue R491. ATP is bound at residue 536–539 (GLDR).

It belongs to the class-II aminoacyl-tRNA synthetase family. Type 1 subfamily. As to quaternary structure, homodimer.

The protein localises to the cytoplasm. It catalyses the reaction tRNA(Asp) + L-aspartate + ATP = L-aspartyl-tRNA(Asp) + AMP + diphosphate. Catalyzes the attachment of L-aspartate to tRNA(Asp) in a two-step reaction: L-aspartate is first activated by ATP to form Asp-AMP and then transferred to the acceptor end of tRNA(Asp). This chain is Aspartate--tRNA ligase, found in Halalkalibacterium halodurans (strain ATCC BAA-125 / DSM 18197 / FERM 7344 / JCM 9153 / C-125) (Bacillus halodurans).